A 436-amino-acid chain; its full sequence is Chaperone protein dnaJ 16 (436 aa).

The 66-residue stretch at 20–85 (DPYEVLGVLR…EKRRQFDSAG (66 aa)) folds into the J domain. Residues 291–348 (TQEKEDLRSVEAQILTKRAELAKFETEYREVLVQFTDMTSRYAQEMQSIDELLKQRNE) are a coiled coil. The tract at residues 360–416 (KRSSSKNRMRKSSFKKAAAKAPAPTEQEEEEEEEEEEEEESSRQKNKKPSTCDKSET) is disordered. Over residues 362-377 (SSSKNRMRKSSFKKAA) the composition is skewed to basic residues. The span at 385–399 (EQEEEEEEEEEEEEE) shows a compositional bias: acidic residues.

The protein belongs to the DnaJ family. B/II subfamily. Expressed constitutively in seedlings, roots, leaves, stems, flowers and siliques.

The protein localises to the membrane. In terms of biological role, plays a continuous role in plant development probably in the structural organization of compartments. Seems to not be involved in gravitropism signaling pathway. The chain is Chaperone protein dnaJ 16 (ATJ16) from Arabidopsis thaliana (Mouse-ear cress).